The primary structure comprises 268 residues: Homeobox protein Hox-D12 (268 aa).

The tract at residues 102 to 124 (TPDAPTASEERSRTRPPFAPESS) is disordered. Residues 200–259 (ARKKRKPYTKQQIAELENEFLVNEFINRQKRKELSNRLNLSDQQVKIWFQNRRMKKKRVV) constitute a DNA-binding region (homeobox).

This sequence belongs to the Abd-B homeobox family.

Its subcellular location is the nucleus. Sequence-specific transcription factor which is part of a developmental regulatory system that provides cells with specific positional identities on the anterior-posterior axis. This chain is Homeobox protein Hox-D12 (Hoxd12), found in Mus musculus (Mouse).